The sequence spans 122 residues: Large ribosomal subunit protein uL14 (122 aa).

Belongs to the universal ribosomal protein uL14 family. Part of the 50S ribosomal subunit. Forms a cluster with proteins L3 and L19. In the 70S ribosome, L14 and L19 interact and together make contacts with the 16S rRNA in bridges B5 and B8.

Its function is as follows. Binds to 23S rRNA. Forms part of two intersubunit bridges in the 70S ribosome. The protein is Large ribosomal subunit protein uL14 of Frankia alni (strain DSM 45986 / CECT 9034 / ACN14a).